Consider the following 33-residue polypeptide: Potassium channel toxin alpha-KTx 24.1 (33 aa).

Intrachain disulfides connect Cys4–Cys23, Cys9–Cys28, Cys13–Cys30, and Cys18–Cys33.

This sequence belongs to the short scorpion toxin superfamily. Potassium channel inhibitor family. Alpha-KTx 24 subfamily. Contains 4 disulfide bonds. Expressed by the venom gland.

It is found in the secreted. In terms of biological role, reversibly blocks voltage-gated potassium channels Kv1.2/KCNA2, Kv1.3/KCNA3 and, weakly, Shaker B. This is Potassium channel toxin alpha-KTx 24.1 from Pandinus imperator (Emperor scorpion).